A 119-amino-acid chain; its full sequence is Ribonuclease P protein component (119 aa).

It belongs to the RnpA family. In terms of assembly, consists of a catalytic RNA component (M1 or rnpB) and a protein subunit.

The catalysed reaction is Endonucleolytic cleavage of RNA, removing 5'-extranucleotides from tRNA precursor.. In terms of biological role, RNaseP catalyzes the removal of the 5'-leader sequence from pre-tRNA to produce the mature 5'-terminus. It can also cleave other RNA substrates such as 4.5S RNA. The protein component plays an auxiliary but essential role in vivo by binding to the 5'-leader sequence and broadening the substrate specificity of the ribozyme. This Syntrophus aciditrophicus (strain SB) protein is Ribonuclease P protein component.